A 192-amino-acid polypeptide reads, in one-letter code: Nucleotidase CA_C3379 (192 aa).

Belongs to the 5'(3')-deoxyribonucleotidase family. It depends on Mg(2+) as a cofactor.

It carries out the reaction sugar phosphate + H2O = sugar + phosphate.. Its function is as follows. Catalyzes the dephosphorylation of nucleotide monophosphates and of different sugar phosphates in vitro. This chain is Nucleotidase CA_C3379, found in Clostridium acetobutylicum (strain ATCC 824 / DSM 792 / JCM 1419 / IAM 19013 / LMG 5710 / NBRC 13948 / NRRL B-527 / VKM B-1787 / 2291 / W).